Here is a 437-residue protein sequence, read N- to C-terminus: Double-stranded RNA-binding protein 3 (437 aa).

The disordered stretch occupies residues 1–22; that stretch reads MKKKSAPTPLPPETANTSPAPI. 2 DRBM domains span residues 35 to 104 and 120 to 187; these read VFKS…EIVK and LCKN…AIQG. Basic and acidic residues-rich tracts occupy residues 288–310 and 320–330; these read AKRV…ENQH and DEARVEQEPSR. The disordered stretch occupies residues 288 to 331; it reads AKRVEDEPPRDIEMVQPDKENQHSDAALVQPDDEARVEQEPSRD.

In terms of biological role, binds double-stranded RNA. The chain is Double-stranded RNA-binding protein 3 (DRB3) from Oryza sativa subsp. japonica (Rice).